Reading from the N-terminus, the 130-residue chain is UPF0251 protein Swol_2090 (130 aa).

This sequence belongs to the UPF0251 family.

This chain is UPF0251 protein Swol_2090, found in Syntrophomonas wolfei subsp. wolfei (strain DSM 2245B / Goettingen).